The chain runs to 314 residues: uncharacterized protein (314 aa).

An N-terminal signal peptide occupies residues 1-26 (MRGRVAGSCAPLGLLLVCLRLPGLFA). Residues 41–60 (GTNLPQLGQPSLTGPPNSEH) show a composition bias toward polar residues. Disordered regions lie at residues 41 to 65 (GTNL…QPAL), 77 to 96 (LKLS…SAVQ), 147 to 191 (GSGP…GKIL), and 292 to 314 (PPGS…LQWG). The span at 147–157 (GSGPLPGESSP) shows a compositional bias: low complexity. The span at 167–177 (SHLHQDSESRR) shows a compositional bias: basic and acidic residues. The span at 303–314 (FPNPPSPGLQWG) shows a compositional bias: pro residues.

As to quaternary structure, binds to numerous extracellular matrix proteins. In terms of tissue distribution, taste cell specific.

It is found in the secreted. The protein resides in the extracellular space. Its subcellular location is the extracellular matrix. This is an uncharacterized protein from Macaca mulatta (Rhesus macaque).